Reading from the N-terminus, the 258-residue chain is Imidazole glycerol phosphate synthase subunit HisF (258 aa).

Residues Asp11 and Asp130 contribute to the active site.

It belongs to the HisA/HisF family. Heterodimer of HisH and HisF.

Its subcellular location is the cytoplasm. The enzyme catalyses 5-[(5-phospho-1-deoxy-D-ribulos-1-ylimino)methylamino]-1-(5-phospho-beta-D-ribosyl)imidazole-4-carboxamide + L-glutamine = D-erythro-1-(imidazol-4-yl)glycerol 3-phosphate + 5-amino-1-(5-phospho-beta-D-ribosyl)imidazole-4-carboxamide + L-glutamate + H(+). It functions in the pathway amino-acid biosynthesis; L-histidine biosynthesis; L-histidine from 5-phospho-alpha-D-ribose 1-diphosphate: step 5/9. In terms of biological role, IGPS catalyzes the conversion of PRFAR and glutamine to IGP, AICAR and glutamate. The HisF subunit catalyzes the cyclization activity that produces IGP and AICAR from PRFAR using the ammonia provided by the HisH subunit. The sequence is that of Imidazole glycerol phosphate synthase subunit HisF from Shigella boydii serotype 18 (strain CDC 3083-94 / BS512).